Reading from the N-terminus, the 566-residue chain is Oxygen-dependent choline dehydrogenase (566 aa).

7–36 is a binding site for FAD; sequence DYIICGAGSAGNVLATRLTEDPDVTVLLLE. The segment at 180–202 is disordered; that stretch reads NGYQQEGFGPMDRTVTPKGRRAS. The active-site Proton acceptor is the histidine 474.

It belongs to the GMC oxidoreductase family. FAD serves as cofactor.

The catalysed reaction is choline + A = betaine aldehyde + AH2. It carries out the reaction betaine aldehyde + NAD(+) + H2O = glycine betaine + NADH + 2 H(+). It participates in amine and polyamine biosynthesis; betaine biosynthesis via choline pathway; betaine aldehyde from choline (cytochrome c reductase route): step 1/1. Involved in the biosynthesis of the osmoprotectant glycine betaine. Catalyzes the oxidation of choline to betaine aldehyde and betaine aldehyde to glycine betaine at the same rate. This Burkholderia orbicola (strain MC0-3) protein is Oxygen-dependent choline dehydrogenase.